Consider the following 756-residue polypeptide: 5-methyltetrahydropteroyltriglutamate--homocysteine methyltransferase (756 aa).

5-methyltetrahydropteroyltri-L-glutamate contacts are provided by residues 20 to 23 (RELK) and Lys-114. L-homocysteine is bound by residues 433–435 (IGS) and Glu-486. Residues 433-435 (IGS) and Glu-486 contribute to the L-methionine site. Residues 517–518 (RC) and Trp-563 each bind 5-methyltetrahydropteroyltri-L-glutamate. Asp-601 lines the L-homocysteine pocket. Asp-601 serves as a coordination point for L-methionine. Position 607 (Glu-607) interacts with 5-methyltetrahydropteroyltri-L-glutamate. Residues His-643, Cys-645, and Glu-667 each coordinate Zn(2+). The Proton donor role is filled by His-696. Cys-728 contributes to the Zn(2+) binding site.

It belongs to the vitamin-B12 independent methionine synthase family. Zn(2+) is required as a cofactor.

The enzyme catalyses 5-methyltetrahydropteroyltri-L-glutamate + L-homocysteine = tetrahydropteroyltri-L-glutamate + L-methionine. Its pathway is amino-acid biosynthesis; L-methionine biosynthesis via de novo pathway; L-methionine from L-homocysteine (MetE route): step 1/1. Catalyzes the transfer of a methyl group from 5-methyltetrahydrofolate to homocysteine resulting in methionine formation. This chain is 5-methyltetrahydropteroyltriglutamate--homocysteine methyltransferase, found in Mycolicibacterium paratuberculosis (strain ATCC BAA-968 / K-10) (Mycobacterium paratuberculosis).